A 702-amino-acid chain; its full sequence is Elongation factor G (702 aa).

The tr-type G domain occupies 8 to 290 (SRYRNIGISA…AVIEYLPSPT (283 aa)). Residues 17–24 (AHIDAGKT), 88–92 (DTPGH), and 142–145 (NKMD) each bind GTP.

It belongs to the TRAFAC class translation factor GTPase superfamily. Classic translation factor GTPase family. EF-G/EF-2 subfamily.

The protein resides in the cytoplasm. Its function is as follows. Catalyzes the GTP-dependent ribosomal translocation step during translation elongation. During this step, the ribosome changes from the pre-translocational (PRE) to the post-translocational (POST) state as the newly formed A-site-bound peptidyl-tRNA and P-site-bound deacylated tRNA move to the P and E sites, respectively. Catalyzes the coordinated movement of the two tRNA molecules, the mRNA and conformational changes in the ribosome. This Edwardsiella ictaluri (strain 93-146) protein is Elongation factor G.